The sequence spans 179 residues: Large ribosomal subunit protein uL6 (179 aa).

It belongs to the universal ribosomal protein uL6 family. Part of the 50S ribosomal subunit.

Functionally, this protein binds to the 23S rRNA, and is important in its secondary structure. It is located near the subunit interface in the base of the L7/L12 stalk, and near the tRNA binding site of the peptidyltransferase center. The protein is Large ribosomal subunit protein uL6 of Alkaliphilus oremlandii (strain OhILAs) (Clostridium oremlandii (strain OhILAs)).